A 429-amino-acid polypeptide reads, in one-letter code: MVDFETAPINAPLAESDPAIARLIDQERDRQETHLELIASENFASSAVMAAQGSVLTNKYAEGLPNKRYYGGCEHVDAIEDLAIERAKELFGAAWANVQPHSGAQANFAVFLALLQPGDTIMGLDLSHGGHLTHGSPVNVSGKWFNVVQYGVDKETQRLDMEAIRQLALEHKPKLIVCGFSAYPRTIDFAAFRAIADEVGAYLLADMAHIAGLVAAGVHPSPVPHCDVVTTTTHKTLRGPRGGLILCRDAEFAKKFDKAVFPGSQGGPLEHVIAAKAVAFGEALRPAFKAYSQQVVANAQALADRLMARGIDVVSGGTDNHVVLLDLRSIGMTGKVADLLVSDVHITANKNTVPFDPESPFVTSGLRLGTAALTTRGFDADAFAEVAEVIADRLLNPEDDAIQARCLERVASLCRRFPLYAMATEPALV.

(6S)-5,6,7,8-tetrahydrofolate is bound by residues leucine 126 and 130–132 (GHL). Lysine 235 bears the N6-(pyridoxal phosphate)lysine mark. 359–361 (SPF) contacts (6S)-5,6,7,8-tetrahydrofolate.

The protein belongs to the SHMT family. In terms of assembly, homodimer. Pyridoxal 5'-phosphate is required as a cofactor.

The protein resides in the cytoplasm. It catalyses the reaction (6R)-5,10-methylene-5,6,7,8-tetrahydrofolate + glycine + H2O = (6S)-5,6,7,8-tetrahydrofolate + L-serine. The protein operates within one-carbon metabolism; tetrahydrofolate interconversion. It participates in amino-acid biosynthesis; glycine biosynthesis; glycine from L-serine: step 1/1. In terms of biological role, catalyzes the reversible interconversion of serine and glycine with tetrahydrofolate (THF) serving as the one-carbon carrier. This reaction serves as the major source of one-carbon groups required for the biosynthesis of purines, thymidylate, methionine, and other important biomolecules. Also exhibits THF-independent aldolase activity toward beta-hydroxyamino acids, producing glycine and aldehydes, via a retro-aldol mechanism. The protein is Serine hydroxymethyltransferase of Synechococcus sp. (strain WH7803).